Consider the following 175-residue polypeptide: Endoribonuclease YbeY (175 aa).

Zn(2+) is bound by residues H129, H133, and H139.

It belongs to the endoribonuclease YbeY family. The cofactor is Zn(2+).

Its subcellular location is the cytoplasm. In terms of biological role, single strand-specific metallo-endoribonuclease involved in late-stage 70S ribosome quality control and in maturation of the 3' terminus of the 16S rRNA. In Lactobacillus gasseri (strain ATCC 33323 / DSM 20243 / BCRC 14619 / CIP 102991 / JCM 1131 / KCTC 3163 / NCIMB 11718 / NCTC 13722 / AM63), this protein is Endoribonuclease YbeY.